The chain runs to 241 residues: Methylthioribulose-1-phosphate dehydratase (241 aa).

The disordered stretch occupies residues Met-1–Glu-20. Cys-100 contributes to the substrate binding site. Zn(2+) contacts are provided by His-117 and His-119. The Proton donor/acceptor role is filled by Glu-146. His-202 contributes to the Zn(2+) binding site.

It belongs to the aldolase class II family. MtnB subfamily. It depends on Zn(2+) as a cofactor.

It localises to the cytoplasm. It carries out the reaction 5-(methylsulfanyl)-D-ribulose 1-phosphate = 5-methylsulfanyl-2,3-dioxopentyl phosphate + H2O. Its pathway is amino-acid biosynthesis; L-methionine biosynthesis via salvage pathway; L-methionine from S-methyl-5-thio-alpha-D-ribose 1-phosphate: step 2/6. In terms of biological role, catalyzes the dehydration of methylthioribulose-1-phosphate (MTRu-1-P) into 2,3-diketo-5-methylthiopentyl-1-phosphate (DK-MTP-1-P). The sequence is that of Methylthioribulose-1-phosphate dehydratase from Blastomyces gilchristii (strain SLH14081) (Blastomyces dermatitidis).